The following is a 295-amino-acid chain: Glycine--tRNA ligase alpha subunit (295 aa).

The protein belongs to the class-II aminoacyl-tRNA synthetase family. In terms of assembly, tetramer of two alpha and two beta subunits.

It is found in the cytoplasm. It carries out the reaction tRNA(Gly) + glycine + ATP = glycyl-tRNA(Gly) + AMP + diphosphate. The polypeptide is Glycine--tRNA ligase alpha subunit (Bacillus licheniformis (strain ATCC 14580 / DSM 13 / JCM 2505 / CCUG 7422 / NBRC 12200 / NCIMB 9375 / NCTC 10341 / NRRL NRS-1264 / Gibson 46)).